Consider the following 113-residue polypeptide: U11-theraphotoxin-Hhn1n (113 aa).

The first 21 residues, 1–21 (MNTVRVTFLLVFVLAVSLGQA), serve as a signal peptide directing secretion. The propeptide occupies 22-74 (DKDENRMEMQEKTEQGKSYLDFAENLLLQKLEELEAKLLEEDSEESRNSRQKR). Residues 60–69 (LEEDSEESRN) show a composition bias toward basic and acidic residues. The tract at residues 60–83 (LEEDSEESRNSRQKRCIGEGVPCD) is disordered. 2 disulfide bridges follow: cysteine 75/cysteine 90 and cysteine 89/cysteine 110.

The protein belongs to the neurotoxin 14 (magi-1) family. 01 (HNTX-16) subfamily. Expressed by the venom gland.

Its subcellular location is the secreted. Its function is as follows. Probable ion channel inhibitor. This is U11-theraphotoxin-Hhn1n from Cyriopagopus hainanus (Chinese bird spider).